We begin with the raw amino-acid sequence, 67 residues long: Large ribosomal subunit protein bL35 (67 aa).

The span at 1-16 shows a compositional bias: basic residues; the sequence is MPKMKTKSSAKKRFRV. Residues 1–24 form a disordered region; sequence MPKMKTKSSAKKRFRVRPGGTVKR.

It belongs to the bacterial ribosomal protein bL35 family.

The sequence is that of Large ribosomal subunit protein bL35 from Delftia acidovorans (strain DSM 14801 / SPH-1).